The following is a 1343-amino-acid chain: DNA-directed RNA polymerase subunit beta (1343 aa).

It belongs to the RNA polymerase beta chain family. As to quaternary structure, the RNAP catalytic core consists of 2 alpha, 1 beta, 1 beta' and 1 omega subunit. When a sigma factor is associated with the core the holoenzyme is formed, which can initiate transcription.

The enzyme catalyses RNA(n) + a ribonucleoside 5'-triphosphate = RNA(n+1) + diphosphate. In terms of biological role, DNA-dependent RNA polymerase catalyzes the transcription of DNA into RNA using the four ribonucleoside triphosphates as substrates. This Haemophilus influenzae (strain PittGG) protein is DNA-directed RNA polymerase subunit beta.